The sequence spans 478 residues: Sulfate adenylyltransferase subunit 1 (478 aa).

The tr-type G domain maps to Lys24 to Asp240. The interval Gly33 to Ser40 is G1. Gly33 to Ser40 contacts GTP. Residues Gly91–Asp95 are G2. The tract at residues Asp112 to Gly115 is G3. GTP is bound by residues Asp112–His116 and Asn167–Asp170. The G4 stretch occupies residues Asn167–Asp170. The G5 stretch occupies residues Ser206 to Leu208.

The protein belongs to the TRAFAC class translation factor GTPase superfamily. Classic translation factor GTPase family. CysN/NodQ subfamily. In terms of assembly, heterodimer composed of CysD, the smaller subunit, and CysN.

It catalyses the reaction sulfate + ATP + H(+) = adenosine 5'-phosphosulfate + diphosphate. It functions in the pathway sulfur metabolism; hydrogen sulfide biosynthesis; sulfite from sulfate: step 1/3. Functionally, with CysD forms the ATP sulfurylase (ATPS) that catalyzes the adenylation of sulfate producing adenosine 5'-phosphosulfate (APS) and diphosphate, the first enzymatic step in sulfur assimilation pathway. APS synthesis involves the formation of a high-energy phosphoric-sulfuric acid anhydride bond driven by GTP hydrolysis by CysN coupled to ATP hydrolysis by CysD. The protein is Sulfate adenylyltransferase subunit 1 of Aliivibrio fischeri (strain MJ11) (Vibrio fischeri).